Consider the following 232-residue polypeptide: Pirin-like protein CC_1473 (232 aa).

Belongs to the pirin family.

This is Pirin-like protein CC_1473 from Caulobacter vibrioides (strain ATCC 19089 / CIP 103742 / CB 15) (Caulobacter crescentus).